The following is a 723-amino-acid chain: Malate synthase G (723 aa).

Acetyl-CoA is bound by residues Val118, 125–126, Ser274, and Arg311; that span reads RY. Arg338 serves as the catalytic Proton acceptor. Residues Arg338, Glu427, and 452 to 455 contribute to the glyoxylate site; that span reads GFLD. Residues Glu427 and Asp455 each coordinate Mg(2+). Residue Pro536 participates in acetyl-CoA binding. Position 617 is a cysteine sulfenic acid (-SOH) (Cys617). Catalysis depends on Asp631, which acts as the Proton donor. Cys688 is subject to Cysteine sulfenic acid (-SOH).

Belongs to the malate synthase family. GlcB subfamily. In terms of assembly, monomer. It depends on Mg(2+) as a cofactor.

Its subcellular location is the cytoplasm. It catalyses the reaction glyoxylate + acetyl-CoA + H2O = (S)-malate + CoA + H(+). Its pathway is carbohydrate metabolism; glyoxylate cycle; (S)-malate from isocitrate: step 2/2. Its function is as follows. Involved in the glycolate utilization. Catalyzes the condensation and subsequent hydrolysis of acetyl-coenzyme A (acetyl-CoA) and glyoxylate to form malate and CoA. The chain is Malate synthase G from Escherichia coli O6:H1 (strain CFT073 / ATCC 700928 / UPEC).